The sequence spans 168 residues: Transcription antitermination protein NusB (168 aa).

It belongs to the NusB family.

Functionally, involved in transcription antitermination. Required for transcription of ribosomal RNA (rRNA) genes. Binds specifically to the boxA antiterminator sequence of the ribosomal RNA (rrn) operons. In Chlamydia trachomatis serovar A (strain ATCC VR-571B / DSM 19440 / HAR-13), this protein is Transcription antitermination protein NusB.